Consider the following 29-residue polypeptide: Cytochrome b6-f complex subunit 8 (29 aa).

The chain crosses the membrane as a helical span at residues 3-23; sequence ILTLGWVSVLTLFTYSIAMVV.

It belongs to the PetN family. The 4 large subunits of the cytochrome b6-f complex are cytochrome b6, subunit IV (17 kDa polypeptide, PetD), cytochrome f and the Rieske protein, while the 4 small subunits are PetG, PetL, PetM and PetN. The complex functions as a dimer.

Its subcellular location is the cellular thylakoid membrane. Its function is as follows. Component of the cytochrome b6-f complex, which mediates electron transfer between photosystem II (PSII) and photosystem I (PSI), cyclic electron flow around PSI, and state transitions. This Acaryochloris marina (strain MBIC 11017) protein is Cytochrome b6-f complex subunit 8.